Here is a 68-residue protein sequence, read N- to C-terminus: Agnoprotein (68 aa).

Residues 1-24 are Cytoplasmic-facing; the sequence is MVLRQLSRQASVKVGKTWTGTKRR. 2 positions are modified to phosphoserine; by host: Ser-7 and Ser-11. The residue at position 21 (Thr-21) is a Phosphothreonine; by host. Residues 25 to 41 traverse the membrane as a helical; Signal-anchor for type II membrane protein segment; it reads AQRIFIFILELLLDFCR. Residues 42–68 lie on the Extracellular side of the membrane; that stretch reads GEDSVDGKKKKDSLTDKTETVTEKKES. The interval 44–68 is disordered; it reads DSVDGKKKKDSLTDKTETVTEKKES.

It belongs to the polyomavirus agnoprotein family. As to quaternary structure, homooligomer. Interacts with VP1. Interacts with large T antigen; this interaction may impact upon the activity of T-antigen on the control of viral gene transcription and replication. Interacts with small t antigen. Interacts with host CBX5; this interaction induces the dissociation of CBX5 from LBR, resulting in destabilization of the nuclear envelope. In terms of processing, phosphorylated by host PKC. Phosphorylation alters the stability and may also have an impact on the subcellular location.

It is found in the host cytoplasm. Its subcellular location is the host nucleus membrane. The protein resides in the host rough endoplasmic reticulum membrane. It localises to the host cell membrane. Alters the structure of the nuclear envelope by interacting with host CBX5 and disrupting CBX5 association with LBR. Involved in the perinuclear-nuclear localization of the capsid protein VP1 during virion assembly and maturation. Plays an important role in the release of progeny virions from infected cells and in viral propagation, probably by acting as a viral ionic channel in the host plasma membrane. Allows influx of extracellular calcium ions in the host cell. May contribute to viral genome transcription and translation of viral late proteins. The polypeptide is Agnoprotein (Simian virus 12 (strain wt100) (SV-12)).